The following is a 257-amino-acid chain: Putative aldolase class 2 protein CC_1201 (257 aa).

The Zn(2+) site is built by His114, His116, and His177.

The protein belongs to the aldolase class II family. Zn(2+) is required as a cofactor.

This Caulobacter vibrioides (strain ATCC 19089 / CIP 103742 / CB 15) (Caulobacter crescentus) protein is Putative aldolase class 2 protein CC_1201.